We begin with the raw amino-acid sequence, 139 residues long: Phosphoribosyl-AMP cyclohydrolase (139 aa).

Asp92 provides a ligand contact to Mg(2+). Cys93 is a binding site for Zn(2+). Residues Asp94 and Asp96 each coordinate Mg(2+). Zn(2+) contacts are provided by Cys111 and Cys118.

Belongs to the PRA-CH family. As to quaternary structure, homodimer. Mg(2+) serves as cofactor. Zn(2+) is required as a cofactor.

The protein localises to the cytoplasm. The catalysed reaction is 1-(5-phospho-beta-D-ribosyl)-5'-AMP + H2O = 1-(5-phospho-beta-D-ribosyl)-5-[(5-phospho-beta-D-ribosylamino)methylideneamino]imidazole-4-carboxamide. Its pathway is amino-acid biosynthesis; L-histidine biosynthesis; L-histidine from 5-phospho-alpha-D-ribose 1-diphosphate: step 3/9. Its function is as follows. Catalyzes the hydrolysis of the adenine ring of phosphoribosyl-AMP. This Caulobacter vibrioides (strain ATCC 19089 / CIP 103742 / CB 15) (Caulobacter crescentus) protein is Phosphoribosyl-AMP cyclohydrolase.